A 492-amino-acid chain; its full sequence is Linolenate hydroperoxide lyase, chloroplastic (492 aa).

The tract at residues 1–33 is disordered; it reads MLLRTMAATSPRPPPSTSLTSQQPPSPPSQLPL. The N-terminal 34 residues, 1-34, are a transit peptide targeting the chloroplast; the sequence is MLLRTMAATSPRPPPSTSLTSQQPPSPPSQLPLR. Residue cysteine 454 coordinates heme.

This sequence belongs to the cytochrome P450 family. Requires heme as cofactor. In terms of tissue distribution, expressed in roots, leaves, flowers and siliques.

The protein resides in the plastid. Its subcellular location is the chloroplast. Catalyzes the conversion of (9Z,11E,15Z)-(13S)-hydroperoxyoctadeca-9,11,15-trienoate to (9Z)-12-oxo-dodec-9-enoate and cis-3-hexenal. Possesses low activity toward (9Z,11E)-(13S)-13-hydroperoxyoctadeca-9,11-dienoate. Required for the synthesis of the green leaf volatiles (GLVs) hexanal and trans-2-hexenal. This Arabidopsis thaliana (Mouse-ear cress) protein is Linolenate hydroperoxide lyase, chloroplastic.